The chain runs to 269 residues: Sushi domain-containing protein 3 (269 aa).

The tract at residues methionine 1–proline 23 is disordered. The Extracellular segment spans residues methionine 1 to lysine 103. The Sushi domain occupies glycine 30–alanine 93. Intrachain disulfides connect cysteine 32–cysteine 75 and cysteine 61–cysteine 91. A helical transmembrane segment spans residues valine 104 to leucine 124. Residues threonine 125–glycine 269 lie on the Cytoplasmic side of the membrane. The interval asparagine 171–cysteine 237 is disordered. Positions valine 176–proline 190 are enriched in gly residues.

The protein localises to the cell membrane. This Mus musculus (Mouse) protein is Sushi domain-containing protein 3 (Susd3).